Consider the following 698-residue polypeptide: Voltage-dependent calcium channel beta subunit-associated regulatory protein (698 aa).

Over 1–41 the chain is Extracellular; that stretch reads MQPTATMATAAATTATVALTTSWDNATSRPTAEPDPILDNY. N-linked (GlcNAc...) asparagine glycosylation occurs at Asn-25. Residues 42–62 traverse the membrane as a helical; Signal-anchor for type III membrane protein segment; that stretch reads VLLVVVMSLFVGGTLVVLSGV. At 63-698 the chain is on the cytoplasmic side; sequence LLLCKRCWEV…APTSPDHSPA (636 aa). Disordered regions lie at residues 90 to 124 and 185 to 275; these read YLDNGTHPIQDPDCRGEDPEGQDTETERFLATSST and ASAA…SSGS. Residues 185–197 show a composition bias toward low complexity; the sequence is ASAAATPHPATTS. Ser-290 and Ser-295 each carry phosphoserine. Disordered regions lie at residues 308–339, 360–421, 438–536, and 554–648; these read SQRASSLDTRGSPKRHHFQRQRAASESMEQEG, PPPR…HAQC, ATAS…RRDY, and PHFD…GSGL. Pro residues predominate over residues 360–375; that stretch reads PPPRPFLASPTSPPPT. Residues 402–413 are compositionally biased toward low complexity; sequence PEHAQQQDPQQE. A compositionally biased stretch (gly residues) spans 459–468; that stretch reads SGSGSGGGGA. Residues 471 to 482 show a composition bias toward pro residues; that stretch reads AFPPPPESPPAL. A compositionally biased stretch (basic and acidic residues) spans 483–493; it reads RPKDGEARRLL. A phosphoserine mark is found at Ser-501, Ser-520, and Ser-524. The span at 562 to 576 shows a compositional bias: basic residues; the sequence is HRTRAHPHTHARKQW. Ser-610 is subject to Phosphoserine. Thr-691 bears the Phosphothreonine mark. 2 positions are modified to phosphoserine: Ser-692 and Ser-696.

In terms of assembly, interacts with voltage-dependent calcium channels CACNB1, CACNB2, CACNB3 and CACNB4 beta subunits; prevents their interaction with the CACNA1C alpha subunit thereby negatively regulating the activity of the corresponding calcium channels. In terms of tissue distribution, expressed by neurons in the cortex, cerebellum and hippocampus and by pancreatic beta cells (at protein level).

The protein localises to the cytoplasmic vesicle. The protein resides in the secretory vesicle. It is found in the synaptic vesicle membrane. It localises to the cell membrane. Its subcellular location is the cell projection. The protein localises to the growth cone. Negatively regulates voltage-gated calcium channels by preventing the interaction between their alpha and beta subunits. Thereby, negatively regulates calcium channels activity at the plasma membrane and indirectly inhibits calcium-regulated exocytosis. This is Voltage-dependent calcium channel beta subunit-associated regulatory protein from Mus musculus (Mouse).